The following is a 1083-amino-acid chain: Carbamoyl phosphate synthase large chain (1083 aa).

A carboxyphosphate synthetic domain region spans residues 1-402 (MPRRDDIKKI…SFQKALRGLE (402 aa)). ATP is bound by residues R129, R169, G175, G176, E208, I210, E215, G241, V242, H243, Q285, and E299. Residues 133 to 328 (KQAMDKIGLD…IAKIAAKLAV (196 aa)) enclose the ATP-grasp 1 domain. Q285, E299, and N301 together coordinate Mg(2+). The Mn(2+) site is built by Q285, E299, and N301. Residues 403–557 (VGAFGFGSDP…YSTYESETEV (155 aa)) are oligomerization domain. Residues 558-944 (PAKGDKKRVV…AFAKSQLAAG (387 aa)) are carbamoyl phosphate synthetic domain. The ATP-grasp 2 domain maps to 683-878 (SSLIDELGLR…VANLATKVMA (196 aa)). Residues R719, R758, L760, E765, G790, V791, H792, S793, Q833, and E849 each contribute to the ATP site. Residues Q833, E849, and N851 each contribute to the Mg(2+) site. Mn(2+) contacts are provided by Q833, E849, and N851. Residues 945–1083 (TVLPESGKIF…SLQRRYAQNV (139 aa)) form the MGS-like domain. Residues 945-1083 (TVLPESGKIF…SLQRRYAQNV (139 aa)) form an allosteric domain region.

The protein belongs to the CarB family. Composed of two chains; the small (or glutamine) chain promotes the hydrolysis of glutamine to ammonia, which is used by the large (or ammonia) chain to synthesize carbamoyl phosphate. Tetramer of heterodimers (alpha,beta)4. Requires Mg(2+) as cofactor. It depends on Mn(2+) as a cofactor.

The enzyme catalyses hydrogencarbonate + L-glutamine + 2 ATP + H2O = carbamoyl phosphate + L-glutamate + 2 ADP + phosphate + 2 H(+). It carries out the reaction hydrogencarbonate + NH4(+) + 2 ATP = carbamoyl phosphate + 2 ADP + phosphate + 2 H(+). It functions in the pathway amino-acid biosynthesis; L-arginine biosynthesis; carbamoyl phosphate from bicarbonate: step 1/1. Its pathway is pyrimidine metabolism; UMP biosynthesis via de novo pathway; (S)-dihydroorotate from bicarbonate: step 1/3. Functionally, large subunit of the glutamine-dependent carbamoyl phosphate synthetase (CPSase). CPSase catalyzes the formation of carbamoyl phosphate from the ammonia moiety of glutamine, carbonate, and phosphate donated by ATP, constituting the first step of 2 biosynthetic pathways, one leading to arginine and/or urea and the other to pyrimidine nucleotides. The large subunit (synthetase) binds the substrates ammonia (free or transferred from glutamine from the small subunit), hydrogencarbonate and ATP and carries out an ATP-coupled ligase reaction, activating hydrogencarbonate by forming carboxy phosphate which reacts with ammonia to form carbamoyl phosphate. The protein is Carbamoyl phosphate synthase large chain of Rhodopirellula baltica (strain DSM 10527 / NCIMB 13988 / SH1).